Here is a 151-residue protein sequence, read N- to C-terminus: MVEELLSLLHALLDRHQALCMENHQLLKQLRLLVCERARLLRQVCPPSCPVPYPSRFSGESGRLPEFIMQTMSYMLANEEHFCNDAMKVAFLISLLSGEAEEWVMPYIESNSYVLGDYQAFVDEMKQYFGWGTDDEDDGDDDEEEEMEEDH.

The segment at glycine 132–histidine 151 is disordered. Positions threonine 133–histidine 151 are enriched in acidic residues.

Belongs to the LDOC1 family. As to quaternary structure, interacts with NOD2.

It localises to the nucleus. May have an important role in the development and/or progression of some cancers. In Mus musculus (Mouse), this protein is Protein LDOC1 (Ldoc1).